We begin with the raw amino-acid sequence, 567 residues long: Dihydroxy-acid dehydratase 1 (567 aa).

C57 contributes to the [2Fe-2S] cluster binding site. D89 lines the Mg(2+) pocket. A [2Fe-2S] cluster-binding site is contributed by C130. D131 and K132 together coordinate Mg(2+). K132 is subject to N6-carboxylysine. C202 is a [2Fe-2S] cluster binding site. Position 454 (E454) interacts with Mg(2+). Catalysis depends on S480, which acts as the Proton acceptor.

The protein belongs to the IlvD/Edd family. In terms of assembly, homodimer. [2Fe-2S] cluster serves as cofactor. Mg(2+) is required as a cofactor.

The enzyme catalyses (2R)-2,3-dihydroxy-3-methylbutanoate = 3-methyl-2-oxobutanoate + H2O. The catalysed reaction is (2R,3R)-2,3-dihydroxy-3-methylpentanoate = (S)-3-methyl-2-oxopentanoate + H2O. The protein operates within amino-acid biosynthesis; L-isoleucine biosynthesis; L-isoleucine from 2-oxobutanoate: step 3/4. It functions in the pathway amino-acid biosynthesis; L-valine biosynthesis; L-valine from pyruvate: step 3/4. Functionally, functions in the biosynthesis of branched-chain amino acids. Catalyzes the dehydration of (2R,3R)-2,3-dihydroxy-3-methylpentanoate (2,3-dihydroxy-3-methylvalerate) into 2-oxo-3-methylpentanoate (2-oxo-3-methylvalerate) and of (2R)-2,3-dihydroxy-3-methylbutanoate (2,3-dihydroxyisovalerate) into 2-oxo-3-methylbutanoate (2-oxoisovalerate), the penultimate precursor to L-isoleucine and L-valine, respectively. This chain is Dihydroxy-acid dehydratase 1, found in Aromatoleum aromaticum (strain DSM 19018 / LMG 30748 / EbN1) (Azoarcus sp. (strain EbN1)).